A 258-amino-acid polypeptide reads, in one-letter code: MLILISPAKTLDYQSPLTTTRYTLPELLDNAQQLIHEARKLTPPQISSLMRISDKLAGINAARFHDWQPNFTPENARQAILVFKGDVYTGLQAETFSEDDFDFAQQHLRMLSGLYGVLRPLDLMQPYRLEMGIRLENARGKDLYQFWGDIITNKLNEALAAQGDNVVINLASDEYFKSVKPKKLNAEIIKPVFLDEKNGKFKIISFYAKKARGLMSRFIIENRLTKPEQLTGFNSEGYFFDEASSSNGELVFKRYEQR.

The protein belongs to the UPF0246 family.

In Escherichia coli O45:K1 (strain S88 / ExPEC), this protein is UPF0246 protein YaaA.